The sequence spans 434 residues: Enolase (434 aa).

Glutamine 165 lines the (2R)-2-phosphoglycerate pocket. Glutamate 207 serves as the catalytic Proton donor. 3 residues coordinate Mg(2+): aspartate 244, glutamate 291, and aspartate 318. (2R)-2-phosphoglycerate-binding residues include lysine 343, arginine 372, serine 373, and lysine 394. Residue lysine 343 is the Proton acceptor of the active site.

The protein belongs to the enolase family. Mg(2+) is required as a cofactor.

It localises to the cytoplasm. It is found in the secreted. The protein localises to the cell surface. The enzyme catalyses (2R)-2-phosphoglycerate = phosphoenolpyruvate + H2O. It functions in the pathway carbohydrate degradation; glycolysis; pyruvate from D-glyceraldehyde 3-phosphate: step 4/5. In terms of biological role, catalyzes the reversible conversion of 2-phosphoglycerate (2-PG) into phosphoenolpyruvate (PEP). It is essential for the degradation of carbohydrates via glycolysis. This chain is Enolase, found in Staphylococcus haemolyticus (strain JCSC1435).